Reading from the N-terminus, the 432-residue chain is Protein trichome birefringence-like 23 (432 aa).

The helical; Signal-anchor for type II membrane protein transmembrane segment at 13–35 (QNTYLIKLVAATLITCLAFRFFV) threads the bilayer. The short motif at 153-155 (GDS) is the GDS motif element. Residues 404–418 (DCLHWCLPGPIDHLN) carry the DCXHWCLPGXXDXWN motif motif.

Belongs to the PC-esterase family. TBL subfamily.

The protein localises to the membrane. May act as a bridging protein that binds pectin and other cell wall polysaccharides. Probably involved in maintaining esterification of pectins. May be involved in the specific O-acetylation of cell wall polymers. The chain is Protein trichome birefringence-like 23 (TBL23) from Arabidopsis thaliana (Mouse-ear cress).